We begin with the raw amino-acid sequence, 259 residues long: Triosephosphate isomerase (259 aa).

10-12 (NWK) contacts substrate. The active-site Electrophile is histidine 102. Catalysis depends on glutamate 174, which acts as the Proton acceptor. Substrate contacts are provided by residues glycine 180, serine 220, and 241–242 (GG).

Belongs to the triosephosphate isomerase family. In terms of assembly, homodimer.

It is found in the cytoplasm. It carries out the reaction D-glyceraldehyde 3-phosphate = dihydroxyacetone phosphate. It participates in carbohydrate biosynthesis; gluconeogenesis. Its pathway is carbohydrate degradation; glycolysis; D-glyceraldehyde 3-phosphate from glycerone phosphate: step 1/1. Its function is as follows. Involved in the gluconeogenesis. Catalyzes stereospecifically the conversion of dihydroxyacetone phosphate (DHAP) to D-glyceraldehyde-3-phosphate (G3P). In Cutibacterium acnes (strain DSM 16379 / KPA171202) (Propionibacterium acnes), this protein is Triosephosphate isomerase.